We begin with the raw amino-acid sequence, 279 residues long: DNA repair protein RecO (279 aa).

Belongs to the RecO family.

Involved in DNA repair and RecF pathway recombination. The sequence is that of DNA repair protein RecO from Thermosynechococcus vestitus (strain NIES-2133 / IAM M-273 / BP-1).